The chain runs to 1024 residues: Eukaryotic translation initiation factor 3 subunit A (1024 aa).

One can recognise a PCI domain in the interval 331 to 508 (VISSNAPGTG…QAITFQDDVF (178 aa)). 2 coiled-coil regions span residues 575 to 717 (AAED…REEA) and 777 to 889 (KRRG…RRSR). Composition is skewed to basic and acidic residues over residues 797 to 866 (KERR…ERRA) and 873 to 886 (DKQR…EANR). Disordered stretches follow at residues 797–973 (KERR…GAYR) and 1001–1024 (AAAA…GRRA). Low complexity-rich tracts occupy residues 890 to 906 (AAGT…AADA) and 946 to 971 (KEAA…SSGA).

This sequence belongs to the eIF-3 subunit A family. In terms of assembly, component of the eukaryotic translation initiation factor 3 (eIF-3) complex.

The protein localises to the cytoplasm. RNA-binding component of the eukaryotic translation initiation factor 3 (eIF-3) complex, which is involved in protein synthesis of a specialized repertoire of mRNAs and, together with other initiation factors, stimulates binding of mRNA and methionyl-tRNAi to the 40S ribosome. The eIF-3 complex specifically targets and initiates translation of a subset of mRNAs involved in cell proliferation. This Mycosarcoma maydis (Corn smut fungus) protein is Eukaryotic translation initiation factor 3 subunit A.